The chain runs to 93 residues: Small ribosomal subunit protein uS19 (93 aa).

It belongs to the universal ribosomal protein uS19 family.

In terms of biological role, protein S19 forms a complex with S13 that binds strongly to the 16S ribosomal RNA. This is Small ribosomal subunit protein uS19 from Lawsonia intracellularis (strain PHE/MN1-00).